We begin with the raw amino-acid sequence, 672 residues long: Bifunctional polymyxin resistance protein ArnA (672 aa).

The formyltransferase ArnAFT stretch occupies residues 1 to 310 (MKAIVFAYHD…EMGMVPQAKL (310 aa)). The active-site Proton donor; for formyltransferase activity is His-104. (6R)-10-formyltetrahydrofolate-binding positions include Arg-114 and 136-140 (VSRAD). The interval 320–672 (RRTRVLILGV…HADNVTDTQG (353 aa)) is dehydrogenase ArnADH. NAD(+) is bound by residues Asp-353 and 374 to 375 (DI). UDP-alpha-D-glucuronate-binding positions include Ala-399, Tyr-404, and 438-439 (TS). Glu-440 serves as the catalytic Proton acceptor; for decarboxylase activity. Residues Arg-466, Asn-498, 532 to 541 (KLVDGGAQKR), and Tyr-619 contribute to the UDP-alpha-D-glucuronate site. Arg-625 (proton donor; for decarboxylase activity) is an active-site residue.

In the N-terminal section; belongs to the Fmt family. UDP-L-Ara4N formyltransferase subfamily. This sequence in the C-terminal section; belongs to the NAD(P)-dependent epimerase/dehydratase family. UDP-glucuronic acid decarboxylase subfamily. In terms of assembly, homohexamer, formed by a dimer of trimers.

It carries out the reaction UDP-alpha-D-glucuronate + NAD(+) = UDP-beta-L-threo-pentopyranos-4-ulose + CO2 + NADH. It catalyses the reaction UDP-4-amino-4-deoxy-beta-L-arabinose + (6R)-10-formyltetrahydrofolate = UDP-4-deoxy-4-formamido-beta-L-arabinose + (6S)-5,6,7,8-tetrahydrofolate + H(+). The protein operates within nucleotide-sugar biosynthesis; UDP-4-deoxy-4-formamido-beta-L-arabinose biosynthesis; UDP-4-deoxy-4-formamido-beta-L-arabinose from UDP-alpha-D-glucuronate: step 1/3. It functions in the pathway nucleotide-sugar biosynthesis; UDP-4-deoxy-4-formamido-beta-L-arabinose biosynthesis; UDP-4-deoxy-4-formamido-beta-L-arabinose from UDP-alpha-D-glucuronate: step 3/3. It participates in bacterial outer membrane biogenesis; lipopolysaccharide biosynthesis. Bifunctional enzyme that catalyzes the oxidative decarboxylation of UDP-glucuronic acid (UDP-GlcUA) to UDP-4-keto-arabinose (UDP-Ara4O) and the addition of a formyl group to UDP-4-amino-4-deoxy-L-arabinose (UDP-L-Ara4N) to form UDP-L-4-formamido-arabinose (UDP-L-Ara4FN). The modified arabinose is attached to lipid A and is required for resistance to polymyxin and cationic antimicrobial peptides. The polypeptide is Bifunctional polymyxin resistance protein ArnA (Pectobacterium carotovorum subsp. carotovorum (strain PC1)).